We begin with the raw amino-acid sequence, 226 residues long: tRNA (guanine-N(7)-)-methyltransferase (226 aa).

The interval 1–22 is disordered; the sequence is MTTPQQPHGPLRSFGRLKSRPV. Positions 59, 84, 111, and 133 each coordinate S-adenosyl-L-methionine. The active site involves D133. K137 contributes to the substrate binding site. Residues 139–144 are interaction with RNA; sequence RHNKRR. Substrate is bound by residues D169 and 206 to 209; that span reads TRYE.

This sequence belongs to the class I-like SAM-binding methyltransferase superfamily. TrmB family.

The catalysed reaction is guanosine(46) in tRNA + S-adenosyl-L-methionine = N(7)-methylguanosine(46) in tRNA + S-adenosyl-L-homocysteine. It participates in tRNA modification; N(7)-methylguanine-tRNA biosynthesis. Functionally, catalyzes the formation of N(7)-methylguanine at position 46 (m7G46) in tRNA. This is tRNA (guanine-N(7)-)-methyltransferase from Caulobacter vibrioides (strain ATCC 19089 / CIP 103742 / CB 15) (Caulobacter crescentus).